A 500-amino-acid chain; its full sequence is Cobyric acid synthase (500 aa).

The region spanning 253–446 is the GATase cobBQ-type domain; sequence KIGVAAIYFP…FHGFFDRPEV (194 aa). The Nucleophile role is filled by cysteine 334. Histidine 438 is an active-site residue.

Belongs to the CobB/CobQ family. CobQ subfamily.

Its pathway is cofactor biosynthesis; adenosylcobalamin biosynthesis. In terms of biological role, catalyzes amidations at positions B, D, E, and G on adenosylcobyrinic A,C-diamide. NH(2) groups are provided by glutamine, and one molecule of ATP is hydrogenolyzed for each amidation. The polypeptide is Cobyric acid synthase (Chlorobaculum tepidum (strain ATCC 49652 / DSM 12025 / NBRC 103806 / TLS) (Chlorobium tepidum)).